We begin with the raw amino-acid sequence, 179 residues long: ATP synthase subunit delta (179 aa).

It belongs to the ATPase delta chain family. In terms of assembly, F-type ATPases have 2 components, F(1) - the catalytic core - and F(0) - the membrane proton channel. F(1) has five subunits: alpha(3), beta(3), gamma(1), delta(1), epsilon(1). F(0) has three main subunits: a(1), b(2) and c(10-14). The alpha and beta chains form an alternating ring which encloses part of the gamma chain. F(1) is attached to F(0) by a central stalk formed by the gamma and epsilon chains, while a peripheral stalk is formed by the delta and b chains.

It is found in the cell membrane. Functionally, f(1)F(0) ATP synthase produces ATP from ADP in the presence of a proton or sodium gradient. F-type ATPases consist of two structural domains, F(1) containing the extramembraneous catalytic core and F(0) containing the membrane proton channel, linked together by a central stalk and a peripheral stalk. During catalysis, ATP synthesis in the catalytic domain of F(1) is coupled via a rotary mechanism of the central stalk subunits to proton translocation. This protein is part of the stalk that links CF(0) to CF(1). It either transmits conformational changes from CF(0) to CF(1) or is implicated in proton conduction. The chain is ATP synthase subunit delta from Rubrobacter xylanophilus (strain DSM 9941 / JCM 11954 / NBRC 16129 / PRD-1).